The primary structure comprises 142 residues: Centromere protein S (142 aa).

Residues 107 to 142 form a disordered region; it reads LKGKAKKKRKPEDESRSSRESMAEELDGAEELQSES. The span at 116–128 shows a compositional bias: basic and acidic residues; that stretch reads KPEDESRSSRESM. Residues 129–142 show a composition bias toward acidic residues; that stretch reads AEELDGAEELQSES.

The protein belongs to the TAF9 family. CENP-S/MHF1 subfamily. In terms of assembly, heterodimer with CENPX, sometimes called MHF; this interaction stabilizes both partners. MHF heterodimers can assemble to form tetrameric structures. MHF also coassemble with CENPT-CENPW heterodimers at centromeres to form the tetrameric CENP-T-W-S-X complex. Forms a discrete complex with FANCM and CENPX, called FANCM-MHF; this interaction, probably mediated by direct binding between CENPS and FANCM, leads to synergistic activation of double-stranded DNA binding and strongly stimulates FANCM-mediated DNA remodeling. Recruited by FANCM to the Fanconi anemia (FA) core complex, which consists of CENPS, CENPX, FANCA, FANCB, FANCC, FANCE, FANCF, FANCG, FANCL, FANCM, FAAP24 and FAAP100. The FA core complex associates with Bloom syndrome (BLM) complex, which consists of at least BLM, DNA topoisomerase 3-alpha (TOP3A), RMI1/BLAP75, RPA1/RPA70 and RPA2/RPA32. The super complex between FA and BLM is called BRAFT. Component of the CENPA-CAD complex, composed of CENPI, CENPK, CENPL, CENPO, CENPP, CENPQ, CENPR and CENPS. The CENPA-CAD complex is probably recruited on centromeres by the CENPA-NAC complex, at least composed of CENPA, CENPC, CENPH, CENPM, CENPN, CENPT and CENPU.

Its subcellular location is the nucleus. It localises to the chromosome. The protein resides in the centromere. It is found in the kinetochore. Functionally, DNA-binding component of the Fanconi anemia (FA) core complex. Required for the normal activation of the FA pathway, leading to monoubiquitination of the FANCI-FANCD2 complex in response to DNA damage, cellular resistance to DNA cross-linking drugs, and prevention of chromosomal breakage. In complex with CENPX (MHF heterodimer), crucial cofactor for FANCM in both binding and ATP-dependent remodeling of DNA. Stabilizes FANCM. In complex with CENPX and FANCM (but not other FANC proteins), rapidly recruited to blocked forks and promotes gene conversion at blocked replication forks. In complex with CENPT, CENPW and CENPX (CENP-T-W-S-X heterotetramer), involved in the formation of a functional kinetochore outer plate, which is essential for kinetochore-microtubule attachment and faithful mitotic progression. As a component of MHF and CENP-T-W-S-X complexes, binds DNA and bends it to form a nucleosome-like structure. DNA-binding function is fulfilled in the presence of CENPX, with the following preference for DNA substates: Holliday junction &gt; double-stranded &gt; splay arm &gt; single-stranded. Does not bind DNA on its own. The polypeptide is Centromere protein S (Cenps) (Mus musculus (Mouse)).